The following is a 329-amino-acid chain: Deoxynucleotidyltransferase terminal-interacting protein 1 (329 aa).

2 disordered regions span residues 1–22 (MGATGDAEQPRGPSGAERGGLE) and 147–178 (KRGRQAEEECAHRGSPLPKKRKGRPPGHILSS). Residues 56–147 (MTTSFTDPAI…RLTHELPGIK (92 aa)) are important for dimerization. Positions 147 to 158 (KRGRQAEEECAH) are enriched in basic and acidic residues. The segment at residues 159–173 (RGSPLPKKRKGRPPG) is a DNA-binding region (a.T hook). Position 161 is a phosphoserine (Ser161). The Nuclear localization signal motif lies at 164–170 (PKKRKGR). The tract at residues 197–316 (REGPKWDPAR…MRKYMETLRT (120 aa)) is important for DNA and nucleosome binding. Positions 216 to 237 (GSRANKALGMGGTRGRIYIKHP) form a DNA-binding region, H-T-H motif.

Monomer and homodimer. A minor proportion may form homotrimers. Interacts with ZNF541. Interacts with the terminal deoxynucleotidyltransferase DNTT. Interacts with TRERF1. Identified in a histone deacetylase complex that contains DNTTIP1, HDAC1 and MIDEAS; this complex assembles into a tetramer that contains four copies of each protein chain. Component of a histone deacetylase complex containing DNTTIP1, ZNF541, HDAC1 and HDAC2. Identified in a complex with KCTD19, HDAC1, HDAC2 and ZNF541.

Its subcellular location is the nucleus. Its function is as follows. Increases DNTT terminal deoxynucleotidyltransferase activity (in vitro). Also acts as a transcriptional regulator, binding to the consensus sequence 5'-GNTGCATG-3' following an AT-tract. Associates with RAB20 promoter and positively regulates its transcription. Binds DNA and nucleosomes; may recruit HDAC1 complexes to nucleosomes or naked DNA. In Pongo abelii (Sumatran orangutan), this protein is Deoxynucleotidyltransferase terminal-interacting protein 1 (DNTTIP1).